A 246-amino-acid polypeptide reads, in one-letter code: tRNA (guanine-N(1)-)-methyltransferase (246 aa).

Residues glycine 117 and 137-142 (IGDYVL) contribute to the S-adenosyl-L-methionine site.

It belongs to the RNA methyltransferase TrmD family. As to quaternary structure, homodimer.

Its subcellular location is the cytoplasm. The enzyme catalyses guanosine(37) in tRNA + S-adenosyl-L-methionine = N(1)-methylguanosine(37) in tRNA + S-adenosyl-L-homocysteine + H(+). Specifically methylates guanosine-37 in various tRNAs. This chain is tRNA (guanine-N(1)-)-methyltransferase, found in Acinetobacter baumannii (strain AB307-0294).